The sequence spans 459 residues: Mitochondrial distribution and morphology protein 34 (459 aa).

Residues 1-190 (MSFRFNEAVF…LPSLIFNTSQ (190 aa)) form the SMP-LTD domain. Residues 338–347 (RSNSNDDNAK) show a composition bias toward basic and acidic residues. Residues 338 to 375 (RSNSNDDNAKPRRRKIKCKKTRTPSNLQSQGEQAVDDS) form a disordered region. Residues 348–359 (PRRRKIKCKKTR) are compositionally biased toward basic residues.

Belongs to the MDM34 family. As to quaternary structure, component of the ER-mitochondria encounter structure (ERMES) or MDM complex, composed of MMM1, MDM10, MDM12 and MDM34. In terms of processing, ubiquitinated by a SCF (SKP1-CUL1-F-box protein) E3 ubiquitin-protein ligase complex containing the F-box protein MDM30. Ubiquitination is important for mitochondrial integrity.

Its subcellular location is the mitochondrion outer membrane. Its function is as follows. Component of the ERMES/MDM complex, which serves as a molecular tether to connect the endoplasmic reticulum (ER) and mitochondria. Components of this complex are involved in the control of mitochondrial shape and protein biogenesis, and function in nonvesicular lipid trafficking between the ER and mitochondria. MDM34 is required for the interaction of the ER-resident membrane protein MMM1 and the outer mitochondrial membrane-resident beta-barrel protein MDM10. This chain is Mitochondrial distribution and morphology protein 34, found in Saccharomyces cerevisiae (strain YJM789) (Baker's yeast).